The primary structure comprises 521 residues: Zinc finger CCCH domain-containing protein 45 (521 aa).

3 disordered regions span residues 28-60 (TEDS…GFEG), 142-185 (TPAI…PLCS), and 296-319 (SRSF…ISPP). The span at 34 to 43 (NVASQPQRHS) shows a compositional bias: polar residues. Residues 159–168 (EESSNSKVES) are compositionally biased toward low complexity. Positions 170-185 (VTANKQGQLETKPLCS) are enriched in polar residues. The C3H1-type zinc finger occupies 469-497 (NKIHQQCIYFGTANGCNMGDSCTYVHDRY).

This chain is Zinc finger CCCH domain-containing protein 45, found in Arabidopsis thaliana (Mouse-ear cress).